We begin with the raw amino-acid sequence, 382 residues long: DNA replication and repair protein RecF (382 aa).

An ATP-binding site is contributed by 30–37 (GPNGHGKS).

This sequence belongs to the RecF family.

It is found in the cytoplasm. Its function is as follows. The RecF protein is involved in DNA metabolism; it is required for DNA replication and normal SOS inducibility. RecF binds preferentially to single-stranded, linear DNA. It also seems to bind ATP. This Magnetococcus marinus (strain ATCC BAA-1437 / JCM 17883 / MC-1) protein is DNA replication and repair protein RecF.